The following is a 511-amino-acid chain: Glucan endo-1,3-beta-glucosidase 1 (511 aa).

The first 28 residues, 1 to 28, serve as a signal peptide directing secretion; it reads MAFTSMVSTVPVLFFFFTLLLISANSSS. The N-linked (GlcNAc...) asparagine glycan is linked to asparagine 109. The active-site Proton donor is glutamate 137. N-linked (GlcNAc...) asparagine glycans are attached at residues asparagine 192 and asparagine 274. The Nucleophile role is filled by glutamate 284. Asparagine 374, asparagine 378, asparagine 407, asparagine 473, and asparagine 480 each carry an N-linked (GlcNAc...) asparagine glycan. Residues cysteine 382 and cysteine 445 are joined by a disulfide bond. Alanine 485 carries the GPI-anchor amidated alanine lipid modification. Residues 486–511 constitute a propeptide, removed in mature form; the sequence is AGEATSRSLSRGFCVTIMILVTFSIL.

This sequence belongs to the glycosyl hydrolase 17 family. Post-translationally, contains two additional disulfide bonds.

The protein resides in the cell membrane. The catalysed reaction is Hydrolysis of (1-&gt;3)-beta-D-glucosidic linkages in (1-&gt;3)-beta-D-glucans.. This chain is Glucan endo-1,3-beta-glucosidase 1, found in Arabidopsis thaliana (Mouse-ear cress).